A 161-amino-acid polypeptide reads, in one-letter code: Effector CFEM5 (161 aa).

Positions 1–23 (MFSLTKSVLFTSIVAIAAQATTA) are cleaved as a signal peptide. The region spanning 24–126 (VSSPTQTSLP…KVLDAVVASA (103 aa)) is the CFEM domain. 3 cysteine pairs are disulfide-bonded: C46–C78, C56–C63, and C65–C100. Position 60 (D60) interacts with heme.

It belongs to the RBT5 family. As to quaternary structure, interacts with Z.mays LRR5; the interaction is direct. Interacts with Z.mays WAK17 isoform 2; the interaction is direct.

It is found in the membrane. Its subcellular location is the secreted. Its function is as follows. Suppresses host programmed cell death during infection by binding to Z.mays WAK17 isoform 2 and Z.mays LRR5, to prevent activation of Z.mays WAK17 isoform 1 and the downstream hypersensitive response. The sequence is that of Effector CFEM5 from Gibberella zeae (strain ATCC MYA-4620 / CBS 123657 / FGSC 9075 / NRRL 31084 / PH-1) (Wheat head blight fungus).